A 366-amino-acid polypeptide reads, in one-letter code: Glucose 1-dehydrogenase (366 aa).

C39 serves as a coordination point for Zn(2+). Residue T41 coordinates substrate. The Zn(2+) site is built by H66 and E67. Residue N89 coordinates substrate. Residues C93, C96, C99, and C107 each coordinate Zn(2+). The substrate site is built by E114, Q150, and D154. Q150 contacts Zn(2+). Residues T189–I192, N211–R213, F277–F279, L305–N307, and K354 contribute to the NADP(+) site. N307 serves as a coordination point for substrate.

Belongs to the zinc-containing alcohol dehydrogenase family. Glucose 1-dehydrogenase subfamily. In terms of assembly, homotetramer. The cofactor is Zn(2+).

The enzyme catalyses D-glucose + NAD(+) = D-glucono-1,5-lactone + NADH + H(+). It carries out the reaction D-glucose + NADP(+) = D-glucono-1,5-lactone + NADPH + H(+). It catalyses the reaction D-galactose + NAD(+) = D-galactono-1,4-lactone + NADH + H(+). The catalysed reaction is D-galactose + NADP(+) = D-galactono-1,5-lactone + NADPH + H(+). The enzyme catalyses an aldopyranose + NAD(+) = aldono-1,5-lactone + NADH + H(+). It carries out the reaction an aldopyranose + NADP(+) = aldono-1,5-lactone + NADPH + H(+). Inhibited by EDTA in vitro. Functionally, catalyzes the NAD(P)(+)-dependent oxidation of D-glucose to D-gluconate via gluconolactone. Displays broad substrate specificity since it is able to catalyze the oxidation of a number of alternative aldose sugars, such as D-galactose, D-xylose and L-arabinose, to the corresponding glyconate. Can utilize both NAD(+) and NADP(+) as electron acceptor. Physiologically, seems to be involved in the degradation of both glucose and galactose through a non-phosphorylative variant of the Entner-Doudoroff pathway. This chain is Glucose 1-dehydrogenase, found in Saccharolobus solfataricus (Sulfolobus solfataricus).